The chain runs to 140 residues: MSRTIMAFDFGTKSIGSAIGQEITGTASPLKAFKANDGIPNWDEIEKQIKEWQPNLLVVGLPTDLHGKALETITPRAKKFAQRLQGRFGLPVELHDERLSTTEARSELFSMGGYKALSKGNVDCQSAVIILESWFEAQWG.

This sequence belongs to the YqgF nuclease family.

The protein resides in the cytoplasm. Could be a nuclease involved in processing of the 5'-end of pre-16S rRNA. The sequence is that of Putative pre-16S rRNA nuclease from Vibrio vulnificus (strain CMCP6).